The chain runs to 249 residues: Methyl-coenzyme M reductase I subunit gamma (249 aa).

Arg120 provides a ligand contact to coenzyme M.

The protein belongs to the methyl-coenzyme M reductase gamma subunit family. MCR is a hexamer of two alpha, two beta, and two gamma chains, forming a dimer of heterotrimers. Coenzyme F430 serves as cofactor.

Its subcellular location is the cytoplasm. It carries out the reaction coenzyme B + methyl-coenzyme M = methane + coenzyme M-coenzyme B heterodisulfide. It participates in one-carbon metabolism; methyl-coenzyme M reduction; methane from methyl-coenzyme M: step 1/1. Methyl-coenzyme M reductase activity is inhibited by 3-nitrooxypropanol (3-NOP) in vitro and in vivo, by oxidation of its active site Ni(I), which stops both growth and methanogenesis. Is also inhibited by the reaction product CoM-S-S-CoB. Component of the methyl-coenzyme M reductase (MCR) I that catalyzes the reductive cleavage of methyl-coenzyme M (CoM-S-CH3 or 2-(methylthio)ethanesulfonate) using coenzyme B (CoB or 7-mercaptoheptanoylthreonine phosphate) as reductant which results in the production of methane and the mixed heterodisulfide of CoB and CoM (CoM-S-S-CoB). This is the final step in methanogenesis. Neither N-6-mercaptohexanoylthreonine phosphate (H-S-HxoTP) nor N-8-mercaptooctanoylthreonine phosphate (H-SOcoTP) nor any other thiol compound such as CoA or CoM can substitute for CoB as the electron donor. The chain is Methyl-coenzyme M reductase I subunit gamma (mcrG) from Methanothermobacter marburgensis (strain ATCC BAA-927 / DSM 2133 / JCM 14651 / NBRC 100331 / OCM 82 / Marburg) (Methanobacterium thermoautotrophicum).